Reading from the N-terminus, the 340-residue chain is tRNA N6-adenosine threonylcarbamoyltransferase (340 aa).

Fe cation is bound by residues histidine 115 and histidine 119. Residues 138–142, aspartate 171, glycine 184, aspartate 188, and asparagine 278 contribute to the substrate site; that span reads VVSGG. Aspartate 306 contributes to the Fe cation binding site.

It belongs to the KAE1 / TsaD family. Requires Fe(2+) as cofactor.

It is found in the cytoplasm. It carries out the reaction L-threonylcarbamoyladenylate + adenosine(37) in tRNA = N(6)-L-threonylcarbamoyladenosine(37) in tRNA + AMP + H(+). Its function is as follows. Required for the formation of a threonylcarbamoyl group on adenosine at position 37 (t(6)A37) in tRNAs that read codons beginning with adenine. Is involved in the transfer of the threonylcarbamoyl moiety of threonylcarbamoyl-AMP (TC-AMP) to the N6 group of A37, together with TsaE and TsaB. TsaD likely plays a direct catalytic role in this reaction. This chain is tRNA N6-adenosine threonylcarbamoyltransferase, found in Clostridium botulinum (strain 657 / Type Ba4).